Reading from the N-terminus, the 206-residue chain is Transmembrane 4 L6 family member 19 (206 aa).

The Cytoplasmic segment spans residues 1–16; sequence MLSFSRVVNCSRTCSR. The helical transmembrane segment at 17-37 threads the bilayer; the sequence is FLGLSLGTASLCAAGANIALL. The Extracellular portion of the chain corresponds to 38–54; that stretch reads FPNWDVTYLMRGLIGKH. The chain crosses the membrane as a helical span at residues 55 to 75; it reads AMLGSGLWGGGLMVLLAATLI. Over 76–89 the chain is Cytoplasmic; sequence SMTGSFSKSAPCLQ. Residues 90-110 form a helical membrane-spanning segment; it reads VLIALLSSGLALLGAVICFVT. Over 111-171 the chain is Extracellular; the sequence is SGVALKDGPF…PSKAVVWHVA (61 aa). An N-linked (GlcNAc...) asparagine glycan is attached at N129. Residues 172 to 192 traverse the membrane as a helical segment; the sequence is FFSILLCISLLQLLLVAIHLV. The interval 182 to 192 is important for homodimerization; sequence LQLLLVAIHLV. Topologically, residues 193–206 are cytoplasmic; it reads NSILGLFCSFCEKH.

Belongs to the L6 tetraspanin family. As to quaternary structure, may form homodimers and homooligomers. Interacts with integrins ITGAV and ITGB3. Interacts with components of members of the V0 complex of vacuolar(H+)-ATPase (V-ATPase), including ATP6V0B and ATP6V0D2; this interaction inhibits V1-V0 complex assembly. In terms of tissue distribution, predominantly expressed in osteoclasts (at protein level). Also expressed in white adipose tissue, as well as in bone marrow-derived macrophages.

Its subcellular location is the lysosome membrane. It is found in the cytoplasm. The protein localises to the cytoskeleton. It localises to the cell projection. The protein resides in the filopodium. Negatively regulates vacuolar (H+)-ATPase (V-ATPase) activity by interacting with members of V-ATPase V0 complex and hence inhibiting V1-V0 assembly. Required for multinucleation during osteoclast differentiation. The sequence is that of Transmembrane 4 L6 family member 19 (Tm4sf19) from Mus musculus (Mouse).